The sequence spans 344 residues: Cell division protein ZipA (344 aa).

The Periplasmic portion of the chain corresponds to Met-1–Leu-6. A helical membrane pass occupies residues Val-7 to Ile-27. Over Arg-28–Ala-344 the chain is Cytoplasmic. Disordered regions lie at residues Val-75–Lys-94 and Gln-108–Gln-139.

The protein belongs to the ZipA family. As to quaternary structure, interacts with FtsZ via their C-terminal domains.

Its subcellular location is the cell inner membrane. Its function is as follows. Essential cell division protein that stabilizes the FtsZ protofilaments by cross-linking them and that serves as a cytoplasmic membrane anchor for the Z ring. Also required for the recruitment to the septal ring of downstream cell division proteins. The protein is Cell division protein ZipA of Shewanella oneidensis (strain ATCC 700550 / JCM 31522 / CIP 106686 / LMG 19005 / NCIMB 14063 / MR-1).